We begin with the raw amino-acid sequence, 107 residues long: UPF0145 protein LVIS_1527 (107 aa).

The protein belongs to the UPF0145 family.

The protein is UPF0145 protein LVIS_1527 of Levilactobacillus brevis (strain ATCC 367 / BCRC 12310 / CIP 105137 / JCM 1170 / LMG 11437 / NCIMB 947 / NCTC 947) (Lactobacillus brevis).